A 280-amino-acid polypeptide reads, in one-letter code: Elongation factor Ts (280 aa).

Positions 79–82 (TDFV) are involved in Mg(2+) ion dislocation from EF-Tu.

It belongs to the EF-Ts family.

It localises to the cytoplasm. Its function is as follows. Associates with the EF-Tu.GDP complex and induces the exchange of GDP to GTP. It remains bound to the aminoacyl-tRNA.EF-Tu.GTP complex up to the GTP hydrolysis stage on the ribosome. This Treponema denticola (strain ATCC 35405 / DSM 14222 / CIP 103919 / JCM 8153 / KCTC 15104) protein is Elongation factor Ts.